The sequence spans 60 residues: Large ribosomal subunit protein uL30 (60 aa).

Belongs to the universal ribosomal protein uL30 family. As to quaternary structure, part of the 50S ribosomal subunit.

This Acidovorax ebreus (strain TPSY) (Diaphorobacter sp. (strain TPSY)) protein is Large ribosomal subunit protein uL30.